Consider the following 179-residue polypeptide: UPF0227 protein Ssed_2836 (179 aa).

Belongs to the UPF0227 family.

The sequence is that of UPF0227 protein Ssed_2836 from Shewanella sediminis (strain HAW-EB3).